Reading from the N-terminus, the 428-residue chain is UDP-N-acetylglucosamine 1-carboxyvinyltransferase 2 (428 aa).

22-23 contributes to the phosphoenolpyruvate binding site; the sequence is KN. Residue Arg92 participates in UDP-N-acetyl-alpha-D-glucosamine binding. Cys116 functions as the Proton donor in the catalytic mechanism. 2-(S-cysteinyl)pyruvic acid O-phosphothioketal is present on Cys116. Residues 121-125, Asp304, and Ile326 each bind UDP-N-acetyl-alpha-D-glucosamine; that span reads RPIDQ.

The protein belongs to the EPSP synthase family. MurA subfamily.

It is found in the cytoplasm. It carries out the reaction phosphoenolpyruvate + UDP-N-acetyl-alpha-D-glucosamine = UDP-N-acetyl-3-O-(1-carboxyvinyl)-alpha-D-glucosamine + phosphate. It participates in cell wall biogenesis; peptidoglycan biosynthesis. In terms of biological role, cell wall formation. Adds enolpyruvyl to UDP-N-acetylglucosamine. The sequence is that of UDP-N-acetylglucosamine 1-carboxyvinyltransferase 2 from Geobacillus kaustophilus (strain HTA426).